A 310-amino-acid chain; its full sequence is Ribosomal RNA small subunit methyltransferase H (310 aa).

S-adenosyl-L-methionine contacts are provided by residues A32–H34, D51, F78, D99, and Q106. Residues G290–K310 form a disordered region.

This sequence belongs to the methyltransferase superfamily. RsmH family.

The protein resides in the cytoplasm. It catalyses the reaction cytidine(1402) in 16S rRNA + S-adenosyl-L-methionine = N(4)-methylcytidine(1402) in 16S rRNA + S-adenosyl-L-homocysteine + H(+). Its function is as follows. Specifically methylates the N4 position of cytidine in position 1402 (C1402) of 16S rRNA. This Exiguobacterium sp. (strain ATCC BAA-1283 / AT1b) protein is Ribosomal RNA small subunit methyltransferase H.